The primary structure comprises 594 residues: Homeobox protein prospero homolog 1 (594 aa).

Composition is skewed to polar residues over residues 1 to 13 and 36 to 50; these read MSSGLPSIAATAQ and PPVNSNGSTPNSSNR. 3 disordered regions span residues 1-20, 30-180, and 358-389; these read MSSGLPSIAATAQPSANGFS, IYYS…FQPQ, and DTSSEMKKKRTKVEIKKEDAMSSRASPLSASA. Low complexity predominate over residues 73–101; it reads STSVSSNSSSSSSTSNTNSTPSSSSTSSK. Polar residues predominate over residues 105–117; sequence EGMTETETMTASI. The segment covering 118–135 has biased composition (basic and acidic residues); that stretch reads EQEKVIQNEESEAGKDGM. Residues 136-162 are compositionally biased toward acidic residues; the sequence is EEHDDGMNDFEIIDDTNDEVEESEERE. Over residues 369-378 the composition is skewed to basic and acidic residues; the sequence is KVEIKKEDAM. The span at 379 to 389 shows a compositional bias: low complexity; that stretch reads SSRASPLSASA. Residues 435–493 enclose the Prospero-type homeo domain; that stretch reads SSMLTPMHLRKAKLMFFYTRYPNSNLLKSYFPDIRFNKNNTAQLVKWFSNFREFYYNQM. The segment at 435-593 is homeo-Prospero; the sequence is SSMLTPMHLR…KEPNFLERLE (159 aa). Residues 494 to 593 form the Prospero domain; that stretch reads EKFARQALAE…KEPNFLERLE (100 aa).

This sequence belongs to the Prospero homeodomain family.

It is found in the nucleus. Transcription factor involved in developmental processes. Controls the transcription of genes required for excretory canal formation. This Caenorhabditis elegans protein is Homeobox protein prospero homolog 1.